Reading from the N-terminus, the 282-residue chain is MLVKEIKLLRNIIKDWRKHGYSIGLVTTMGFLHEGHQSLIKKAVKENDKVVVSVFVNPTQFGPNEDFNSYPRDIDKDFKYCMDSGATVVFNPSPEEMYLKGNCTTINVSGLTDFLCGAKRPVHFGGVCLVVSKFLNIVTPDKAYFGEKDAQQLAVIKRMVKDLNIDTEIIGCPIIRENDGLAKSSRNTYLSEEERKSALILNKSLSLAKEELVKGNLNPENIKELITAKINSEHLAKIDYVEIVDSETLQPVKQIEHSILVAIAVFIGKTRLIDNFTFELNI.

Residue 29 to 36 coordinates ATP; that stretch reads MGFLHEGH. His36 acts as the Proton donor in catalysis. Gln60 lines the (R)-pantoate pocket. Gln60 is a binding site for beta-alanine. Residue 146-149 participates in ATP binding; it reads GEKD. Residue Gln152 coordinates (R)-pantoate. ATP contacts are provided by residues Ile175 and 183 to 186; that span reads KSSR.

It belongs to the pantothenate synthetase family. As to quaternary structure, homodimer.

It localises to the cytoplasm. The catalysed reaction is (R)-pantoate + beta-alanine + ATP = (R)-pantothenate + AMP + diphosphate + H(+). It functions in the pathway cofactor biosynthesis; (R)-pantothenate biosynthesis; (R)-pantothenate from (R)-pantoate and beta-alanine: step 1/1. In terms of biological role, catalyzes the condensation of pantoate with beta-alanine in an ATP-dependent reaction via a pantoyl-adenylate intermediate. The sequence is that of Pantothenate synthetase from Clostridioides difficile (strain 630) (Peptoclostridium difficile).